Here is a 409-residue protein sequence, read N- to C-terminus: Arginine deiminase (409 aa).

The active-site Amidino-cysteine intermediate is cysteine 399.

The protein belongs to the arginine deiminase family.

It localises to the cytoplasm. It catalyses the reaction L-arginine + H2O = L-citrulline + NH4(+). The protein operates within amino-acid degradation; L-arginine degradation via ADI pathway; carbamoyl phosphate from L-arginine: step 1/2. This Borrelia recurrentis (strain A1) protein is Arginine deiminase.